Consider the following 61-residue polypeptide: Translational regulator CsrA (61 aa).

This sequence belongs to the CsrA/RsmA family. As to quaternary structure, homodimer; the beta-strands of each monomer intercalate to form a hydrophobic core, while the alpha-helices form wings that extend away from the core.

Its subcellular location is the cytoplasm. Functionally, a key translational regulator that binds mRNA to regulate translation initiation and/or mRNA stability. Mediates global changes in gene expression, shifting from rapid growth to stress survival by linking envelope stress, the stringent response and the catabolite repression systems. Usually binds in the 5'-UTR; binding at or near the Shine-Dalgarno sequence prevents ribosome-binding, repressing translation, binding elsewhere in the 5'-UTR can activate translation and/or stabilize the mRNA. Its function is antagonized by small RNA(s). This is Translational regulator CsrA from Actinobacillus succinogenes (strain ATCC 55618 / DSM 22257 / CCUG 43843 / 130Z).